Consider the following 162-residue polypeptide: Lipoprotein signal peptidase (162 aa).

Transmembrane regions (helical) follow at residues 56–76 (FLPP…VVWY) and 84–104 (SPLF…NLID). Catalysis depends on residues Asp113 and Asp139. A helical transmembrane segment spans residues 132-152 (WPIFNVADSCITIGACMIVLF).

This sequence belongs to the peptidase A8 family.

The protein resides in the cell inner membrane. The enzyme catalyses Release of signal peptides from bacterial membrane prolipoproteins. Hydrolyzes -Xaa-Yaa-Zaa-|-(S,diacylglyceryl)Cys-, in which Xaa is hydrophobic (preferably Leu), and Yaa (Ala or Ser) and Zaa (Gly or Ala) have small, neutral side chains.. It functions in the pathway protein modification; lipoprotein biosynthesis (signal peptide cleavage). Its function is as follows. This protein specifically catalyzes the removal of signal peptides from prolipoproteins. In Chlorobaculum tepidum (strain ATCC 49652 / DSM 12025 / NBRC 103806 / TLS) (Chlorobium tepidum), this protein is Lipoprotein signal peptidase.